Consider the following 138-residue polypeptide: Large ribosomal subunit protein uL16 (138 aa).

This sequence belongs to the universal ribosomal protein uL16 family. In terms of assembly, part of the 50S ribosomal subunit.

In terms of biological role, binds 23S rRNA and is also seen to make contacts with the A and possibly P site tRNAs. The chain is Large ribosomal subunit protein uL16 from Hyphomonas neptunium (strain ATCC 15444).